Consider the following 97-residue polypeptide: Co-chaperonin GroES (97 aa).

The protein belongs to the GroES chaperonin family. As to quaternary structure, heptamer of 7 subunits arranged in a ring. Interacts with the chaperonin GroEL.

The protein localises to the cytoplasm. Together with the chaperonin GroEL, plays an essential role in assisting protein folding. The GroEL-GroES system forms a nano-cage that allows encapsulation of the non-native substrate proteins and provides a physical environment optimized to promote and accelerate protein folding. GroES binds to the apical surface of the GroEL ring, thereby capping the opening of the GroEL channel. In Erwinia tasmaniensis (strain DSM 17950 / CFBP 7177 / CIP 109463 / NCPPB 4357 / Et1/99), this protein is Co-chaperonin GroES.